We begin with the raw amino-acid sequence, 239 residues long: Hexuronic acid methyltransferase AglP (239 aa).

Belongs to the FkbM methyltransferase family.

It is found in the cytoplasm. Its pathway is cell surface structure biogenesis; S-layer biogenesis. In terms of biological role, involved in the assembly of a N-linked pentasaccharide that decorates the S-layer glycoprotein and flagellins. S-adenosyl-L-methionine-dependent methyltransferase that modifies the hexuronic acid found at position 4 of the pentasaccharide. In Haloferax volcanii (strain ATCC 29605 / DSM 3757 / JCM 8879 / NBRC 14742 / NCIMB 2012 / VKM B-1768 / DS2) (Halobacterium volcanii), this protein is Hexuronic acid methyltransferase AglP (aglP).